A 215-amino-acid chain; its full sequence is Cytochrome b6 (215 aa).

Residues 32–52 form a helical membrane-spanning segment; sequence VFYCFGGMTLTCFLVQLATGF. Cysteine 35 provides a ligand contact to heme c. Heme b is bound by residues histidine 86 and histidine 100. Transmembrane regions (helical) follow at residues 90-110, 116-136, and 186-206; these read ASMM…TGGF, LTWI…VTGY, and LHTL…FLMI. Heme b contacts are provided by histidine 187 and histidine 202.

The protein belongs to the cytochrome b family. PetB subfamily. In terms of assembly, the 4 large subunits of the cytochrome b6-f complex are cytochrome b6, subunit IV (17 kDa polypeptide, PetD), cytochrome f and the Rieske protein, while the 4 small subunits are PetG, PetL, PetM and PetN. The complex functions as a dimer. Heme b serves as cofactor. Heme c is required as a cofactor.

It localises to the plastid. It is found in the chloroplast thylakoid membrane. Its function is as follows. Component of the cytochrome b6-f complex, which mediates electron transfer between photosystem II (PSII) and photosystem I (PSI), cyclic electron flow around PSI, and state transitions. The sequence is that of Cytochrome b6 from Cyanidium caldarium (Red alga).